The primary structure comprises 92 residues: Protein RESPONSE TO LOW SULFUR 4 (92 aa).

Residues 8 to 63 (VMVAASEVEELRQKNGEMEKAVEEMRKEMLQLWRRTQVAEEAEEHLCSQLAELEAE) are a coiled coil.

Its function is as follows. Required for flower development in short-day conditions. The chain is Protein RESPONSE TO LOW SULFUR 4 from Arabidopsis thaliana (Mouse-ear cress).